A 347-amino-acid chain; its full sequence is MLKKFRGMFSNDLSIDLGTANTLIYVKGQGIVLNEPSVVAIRQDRAGSPKSVAAVGHDAKQMLGRTPGNIAAIRPMKDGVIADFFVTEKMLQHFIKQVHSNSFMRPSPRVLVCVPVGATQVERRAIRESAQGAGAREVFLIEEPMAAAIGAGLPVSEATGSMVVDIGGGTTEVAVISLNGVVYSSSVRIGGDRFDEAIINYVRRNYGSLIGEATAERIKHEIGSAYPGDEVREIEVRGRNLAEGVPRGFTLNSNEILEALQEPLTGIVSAVMVALEQCPPELASDISERGMVLTGGGALLRNLDRLLMEETGIPVVVAEDPLTCVARGGGKALEMIDMHGGDLFSEE.

ATP is bound by residues 19–21 (TAN), 168–170 (GGT), 216–219 (ERIK), and 296–299 (GGAL).

This sequence belongs to the FtsA/MreB family. Forms polymers.

It is found in the cytoplasm. Its function is as follows. Forms membrane-associated dynamic filaments that are essential for cell shape determination. Acts by regulating cell wall synthesis and cell elongation, and thus cell shape. A feedback loop between cell geometry and MreB localization may maintain elongated cell shape by targeting cell wall growth to regions of negative cell wall curvature. The polypeptide is Cell shape-determining protein MreB (Escherichia coli O6:H1 (strain CFT073 / ATCC 700928 / UPEC)).